The sequence spans 96 residues: U-scoloptoxin(06)-Sm1a (96 aa).

Positions 1–23 are cleaved as a signal peptide; it reads MNSFSFFLVIFVVLNLQVAKLMA.

The protein belongs to the scoloptoxin-06 family. In terms of processing, contains 2 disulfide bonds. In terms of tissue distribution, expressed by the venom gland.

It localises to the secreted. This is U-scoloptoxin(06)-Sm1a from Scolopendra morsitans (Tanzanian blue ringleg centipede).